We begin with the raw amino-acid sequence, 196 residues long: Adenylate kinase (196 aa).

Position 9-17 (9-17 (GIPGVGKST)) interacts with ATP.

Belongs to the archaeal adenylate kinase family.

Its subcellular location is the cytoplasm. The catalysed reaction is AMP + ATP = 2 ADP. This is Adenylate kinase from Pyrococcus furiosus (strain ATCC 43587 / DSM 3638 / JCM 8422 / Vc1).